Consider the following 217-residue polypeptide: Pyrophosphatase PpaX (217 aa).

D11 (nucleophile) is an active-site residue.

The protein belongs to the HAD-like hydrolase superfamily. PpaX family. Requires Mg(2+) as cofactor.

It catalyses the reaction diphosphate + H2O = 2 phosphate + H(+). In terms of biological role, hydrolyzes pyrophosphate formed during P-Ser-HPr dephosphorylation by HPrK/P. Might play a role in controlling the intracellular pyrophosphate pool. The polypeptide is Pyrophosphatase PpaX (Listeria welshimeri serovar 6b (strain ATCC 35897 / DSM 20650 / CCUG 15529 / CIP 8149 / NCTC 11857 / SLCC 5334 / V8)).